The following is a 435-amino-acid chain: Zinc finger CCCH domain-containing protein 16 (435 aa).

Residues 1 to 27 form a C3H1-type zinc finger; that stretch reads MRKELCRNFQRGSCRYGENCRFLHPQQ. The tract at residues 2-88 is 6 X 2 AA repeats of F-G; the sequence is RKELCRNFQR…ASTPTGGGAA (87 aa). Disordered regions lie at residues 25 to 105 and 205 to 374; these read PQQA…DHKC and TPSI…SQNN. 2 repeat units span residues 34 to 35 and 36 to 37. A compositionally biased stretch (low complexity) spans 39–51; the sequence is QNQQQQQQQQQQN. Tandem repeats lie at residues 56-57 and 58-59. A compositionally biased stretch (polar residues) spans 63–77; sequence GGSSRPNQFQNTWSR. A compositionally biased stretch (low complexity) spans 78–99; the sequence is TASTPTGGGAAASTQQTGKQTQ. Polar residues-rich tracts occupy residues 205 to 320 and 328 to 339; these read TPSI…VNTP and SGFQTNPSTTFK. Tandem repeats lie at residues 343 to 344 and 359 to 360. Polar residues predominate over residues 351-374; it reads TTPQNNNIFGQSTPTPATNTSQNN.

As to quaternary structure, part of the nuclear pore complex (NPC). The NPC has an eight-fold symmetrical structure comprising a central transport channel and two rings, the cytoplasmic and nuclear rings, to which eight filaments are attached. The cytoplasmic filaments have loose ends, while the nuclear filaments are joined in a distal ring, forming a nuclear basket. NPCs are highly dynamic in configuration and composition, and can be devided in 3 subcomplexes, the NUP62 subcomplex, the NUP107-160 subcomplex and the NUP93 subcomplex, containing approximately 30 different nucleoporin proteins.

It is found in the nucleus envelope. It localises to the nucleus. Its subcellular location is the nuclear pore complex. The protein is Zinc finger CCCH domain-containing protein 16 of Arabidopsis thaliana (Mouse-ear cress).